The sequence spans 124 residues: Small ribosomal subunit protein uS12 (124 aa).

Aspartate 89 is modified (3-methylthioaspartic acid). The tract at residues 104-124 (SAGVQNRNRGRSKYGTKRPKK) is disordered. Basic residues predominate over residues 111 to 124 (NRGRSKYGTKRPKK).

It belongs to the universal ribosomal protein uS12 family. Part of the 30S ribosomal subunit. Contacts proteins S8 and S17. May interact with IF1 in the 30S initiation complex.

With S4 and S5 plays an important role in translational accuracy. In terms of biological role, interacts with and stabilizes bases of the 16S rRNA that are involved in tRNA selection in the A site and with the mRNA backbone. Located at the interface of the 30S and 50S subunits, it traverses the body of the 30S subunit contacting proteins on the other side and probably holding the rRNA structure together. The combined cluster of proteins S8, S12 and S17 appears to hold together the shoulder and platform of the 30S subunit. The protein is Small ribosomal subunit protein uS12 of Desulforamulus reducens (strain ATCC BAA-1160 / DSM 100696 / MI-1) (Desulfotomaculum reducens).